The primary structure comprises 337 residues: S-adenosylmethionine:tRNA ribosyltransferase-isomerase (337 aa).

It belongs to the QueA family. As to quaternary structure, monomer.

It localises to the cytoplasm. It carries out the reaction 7-aminomethyl-7-carbaguanosine(34) in tRNA + S-adenosyl-L-methionine = epoxyqueuosine(34) in tRNA + adenine + L-methionine + 2 H(+). Its pathway is tRNA modification; tRNA-queuosine biosynthesis. Transfers and isomerizes the ribose moiety from AdoMet to the 7-aminomethyl group of 7-deazaguanine (preQ1-tRNA) to give epoxyqueuosine (oQ-tRNA). This is S-adenosylmethionine:tRNA ribosyltransferase-isomerase from Legionella pneumophila subsp. pneumophila (strain Philadelphia 1 / ATCC 33152 / DSM 7513).